The sequence spans 480 residues: Aspartyl/glutamyl-tRNA(Asn/Gln) amidotransferase subunit B (480 aa).

Belongs to the GatB/GatE family. GatB subfamily. As to quaternary structure, heterotrimer of A, B and C subunits.

It catalyses the reaction L-glutamyl-tRNA(Gln) + L-glutamine + ATP + H2O = L-glutaminyl-tRNA(Gln) + L-glutamate + ADP + phosphate + H(+). The enzyme catalyses L-aspartyl-tRNA(Asn) + L-glutamine + ATP + H2O = L-asparaginyl-tRNA(Asn) + L-glutamate + ADP + phosphate + 2 H(+). Functionally, allows the formation of correctly charged Asn-tRNA(Asn) or Gln-tRNA(Gln) through the transamidation of misacylated Asp-tRNA(Asn) or Glu-tRNA(Gln) in organisms which lack either or both of asparaginyl-tRNA or glutaminyl-tRNA synthetases. The reaction takes place in the presence of glutamine and ATP through an activated phospho-Asp-tRNA(Asn) or phospho-Glu-tRNA(Gln). This is Aspartyl/glutamyl-tRNA(Asn/Gln) amidotransferase subunit B from Streptococcus thermophilus (strain ATCC BAA-250 / LMG 18311).